Reading from the N-terminus, the 198-residue chain is Nucleoid occlusion factor SlmA (198 aa).

The HTH tetR-type domain occupies 10 to 70 (NRREEILQSL…SLIEFIEDSL (61 aa)). The segment at residues 33 to 52 (TTAKLAASVGVSEAALYRHF) is a DNA-binding region (H-T-H motif). Residues 117-144 (EQDRLQGRINQLFERIEAQLRQVLREKR) adopt a coiled-coil conformation.

Belongs to the nucleoid occlusion factor SlmA family. In terms of assembly, homodimer. Interacts with FtsZ.

Its subcellular location is the cytoplasm. The protein resides in the nucleoid. Required for nucleoid occlusion (NO) phenomenon, which prevents Z-ring formation and cell division over the nucleoid. Acts as a DNA-associated cell division inhibitor that binds simultaneously chromosomal DNA and FtsZ, and disrupts the assembly of FtsZ polymers. SlmA-DNA-binding sequences (SBS) are dispersed on non-Ter regions of the chromosome, preventing FtsZ polymerization at these regions. In Salmonella typhi, this protein is Nucleoid occlusion factor SlmA.